Consider the following 228-residue polypeptide: Putative adhesin RBE_1271 (228 aa).

A signal peptide spans 1–22; that stretch reads MKKLLLIAATSATVLSSALSFA.

This Rickettsia bellii (strain RML369-C) protein is Putative adhesin RBE_1271.